Reading from the N-terminus, the 145-residue chain is Neuromedin-S (145 aa).

Positions 1–27 are cleaved as a signal peptide; it reads MRSEKHLPPLPLLLAICCLGTLHPSSG. 2 consecutive propeptides follow at residues 28-89 and 92-117; these read FPQS…HEIY and FLFQ…AEYT. An Asparagine amide modification is found at N136. The propeptide occupies 140 to 145; sequence VSINEH.

Belongs to the NmU family. As to expression, expressed by the skin glands.

Its subcellular location is the secreted. Stimulates uterine smooth muscle contraction. Synthetic peptide NmS-17 induces calcium mobilization in CHO cells transfected with either human FM-3/GPR66 (EC(50)=0.085 nM) or FM-4/TGR-1 (EC(50)=0.231 nM) NmU/NmS receptors. The sequence is that of Neuromedin-S (nms) from Bombina orientalis (Oriental fire-bellied toad).